Reading from the N-terminus, the 135-residue chain is MVKMINLLVVENNNSNWDKIFSFVFDIFLFIFDVIWNTKLPMTNTSIAYFLVFFMVIKLSIYAIHGTSTQYNNLGSTVNNGVSQVYSSTVRKGINVGKNVYQNSNKQQVKKELKRQSIRYQAKNIRSTKFKGDKK.

Transmembrane regions (helical) follow at residues 20–40 and 47–67; these read IFSFVFDIFLFIFDVIWNTKL and IAYFLVFFMVIKLSIYAIHGT.

This sequence belongs to the plectrovirus ORF5 family.

The protein resides in the host membrane. This is an uncharacterized protein from Spiroplasma virus SpV1-C74 (SpV1).